Consider the following 1026-residue polypeptide: Multidrug resistance protein MdtC (1026 aa).

The next 11 helical transmembrane spans lie at 15–35, 333–353, 360–380, 387–407, 431–451, 463–483, 528–548, 853–873, 897–917, 953–973, and 984–1004; these read ILIAAAITLCGILGFRLLPVA, EVEETLAISVALVILVVFLFL, LIPAVAVPVSLIGTFAAMYLC, LSLMALTIATGFVVDDAIVVL, VGFTVISMSLSLVAVFLPLLL, FAVTLSVAIGISLVVSLTLTP, LVGVVFLGTVALNIWLYIAIP, LILIVAAIATVYIVLGILYES, LFNAPFSLIALIGIMLLIGIV, PIMMTTLAALFGALPLVLSDG, and ITIVGGLVMSQLLTLYTTPVV.

This sequence belongs to the resistance-nodulation-cell division (RND) (TC 2.A.6) family. MdtC subfamily. In terms of assembly, part of a tripartite efflux system composed of MdtA, MdtB and MdtC. MdtC forms a heteromultimer with MdtB.

The protein resides in the cell inner membrane. In Salmonella heidelberg (strain SL476), this protein is Multidrug resistance protein MdtC.